Here is a 134-residue protein sequence, read N- to C-terminus: Global transcriptional regulator Spx (134 aa).

Cys10 and Cys13 are oxidised to a cystine.

This sequence belongs to the ArsC family. Spx subfamily. In terms of assembly, interacts with the C-terminal domain of the alpha subunit of the RNAP.

Its subcellular location is the cytoplasm. Global transcriptional regulator that plays a key role in stress response and exerts either positive or negative regulation of genes. Acts by interacting with the C-terminal domain of the alpha subunit of the RNA polymerase (RNAP). This interaction can enhance binding of RNAP to the promoter region of target genes and stimulate their transcription, or block interaction of RNAP with activator. This is Global transcriptional regulator Spx from Streptococcus pyogenes serotype M1.